The chain runs to 312 residues: MKVAVIGAAGGIGQALALLLKNGLPAGSDLALYDIAPVTPGVAADLSHIPTPVSIKGYGGVDPTPALEGADVVLISAGVARKPGMDRSDLFNVNAGIIKSLAEKIAVVCPKACVGIITNPVNTTVAIAADVLKKAGVYDKRRLFGITTLDIIRSETFVAELKGKTPSDIQVPVIGGHSGVTILPLLSQVEGVEFSDEEIKALTPRIQNAGTEVVEAKAGGGSATLSMGQAAYRFGLSLVRALQGEQGIVECAYVEGDGKHARFFAQPVLLGKDGVEEVIDYGKLSTFEQEALNNMLDTLTSDITLGEEFAAK.

Residues 7 to 13 (GAAGGIG) and D34 each bind NAD(+). 2 residues coordinate substrate: R81 and R87. Residues N94 and 117–119 (ITN) contribute to the NAD(+) site. 2 residues coordinate substrate: N119 and R153. H177 serves as the catalytic Proton acceptor. M227 serves as a coordination point for NAD(+).

Belongs to the LDH/MDH superfamily. MDH type 1 family. Homodimer.

The enzyme catalyses (S)-malate + NAD(+) = oxaloacetate + NADH + H(+). In terms of biological role, catalyzes the reversible oxidation of malate to oxaloacetate. In Photobacterium profundum (strain SS9), this protein is Malate dehydrogenase.